Here is a 66-residue protein sequence, read N- to C-terminus: Large ribosomal subunit protein bL33c (66 aa).

It belongs to the bacterial ribosomal protein bL33 family.

The protein resides in the plastid. It localises to the chloroplast. The sequence is that of Large ribosomal subunit protein bL33c from Populus alba (White poplar).